We begin with the raw amino-acid sequence, 302 residues long: MSIKILSESEIKQVANSYQAPAVLFANPKNLYQRRAKRLRDLAQNHPLSDYLLFAADIVESQLSTLEKNPLPPQQLEQLNAIEPLNTKTFKRDSIWREYLTEILDEIKPKANEQIAATIEFLEKASFAELEEMANKLLTQEFNLVSSDKAVFIWAALSLYWLQAAQQIPHNSQVENTENLHHCPVCGSLPVASIVQIGTSQGLRYLHCNLCESEWNLVRAQCTNCNSHDKLEIWSLNEELALVRAETCGSCESYLKMMFQEKDPYVEPVADDLASIFLDIEMEEKGFARSGLNPFIFPAEEA.

It belongs to the FdhE family.

Its subcellular location is the cytoplasm. Necessary for formate dehydrogenase activity. This Haemophilus influenzae (strain PittGG) protein is Protein FdhE homolog.